The sequence spans 314 residues: Peroxidase 2 (314 aa).

The first 23 residues, 1–23, serve as a signal peptide directing secretion; sequence MASASSVSLMLLVAAAMASAASA. Gln-24 is subject to Pyrrolidone carboxylic acid. 4 disulfides stabilise this stretch: Cys-34–Cys-109, Cys-67–Cys-72, Cys-115–Cys-310, and Cys-194–Cys-219. Residue His-65 is the Proton acceptor of the active site. The Ca(2+) site is built by Asp-66, Val-69, Gly-71, Asp-73, and Ser-75. Asn-148 carries an N-linked (GlcNAc...) asparagine glycan. Pro-157 serves as a coordination point for substrate. The N-linked (GlcNAc...) asparagine glycan is linked to Asn-169. Residue His-187 coordinates heme b. Thr-188 provides a ligand contact to Ca(2+). Residue Asn-203 is glycosylated (N-linked (GlcNAc...) asparagine). Ca(2+) is bound by residues Asp-234, Thr-237, and Asp-242. Residues Asn-274 and Asn-309 are each glycosylated (N-linked (GlcNAc...) asparagine).

The protein belongs to the peroxidase family. Classical plant (class III) peroxidase subfamily. Ca(2+) is required as a cofactor. It depends on heme b as a cofactor.

It is found in the secreted. The catalysed reaction is 2 a phenolic donor + H2O2 = 2 a phenolic radical donor + 2 H2O. Its function is as follows. Removal of H(2)O(2), oxidation of toxic reductants, biosynthesis and degradation of lignin, suberization, auxin catabolism, response to environmental stresses such as wounding, pathogen attack and oxidative stress. These functions might be dependent on each isozyme/isoform in each plant tissue. The sequence is that of Peroxidase 2 (PRX112) from Oryza sativa subsp. indica (Rice).